Here is a 303-residue protein sequence, read N- to C-terminus: Protein translocase subunit SecF (303 aa).

6 helical membrane-spanning segments follow: residues 28-48 (SIILSLISFIWIGMYKFNFGI), 140-160 (IEAGTMAMLFSFAAIMIYIWV), 164-184 (WYFGLGILIALVHDVILALGF), 194-214 (LSTIAAVLTIIGYSVNDSVVI), 246-266 (ILTVVTTLLANLALVLFGGEA), and 272-292 (VLVFFGIIAGTYSSIFISAPI).

It belongs to the SecD/SecF family. SecF subfamily. In terms of assembly, forms a complex with SecD. Part of the essential Sec protein translocation apparatus which comprises SecA, SecYEG and auxiliary proteins SecDF-YajC and YidC.

It localises to the cell inner membrane. In terms of biological role, part of the Sec protein translocase complex. Interacts with the SecYEG preprotein conducting channel. SecDF uses the proton motive force (PMF) to complete protein translocation after the ATP-dependent function of SecA. In Rickettsia bellii (strain OSU 85-389), this protein is Protein translocase subunit SecF.